A 125-amino-acid polypeptide reads, in one-letter code: Large ribosomal subunit protein bL12 (125 aa).

The protein belongs to the bacterial ribosomal protein bL12 family. In terms of assembly, homodimer. Part of the ribosomal stalk of the 50S ribosomal subunit. Forms a multimeric L10(L12)X complex, where L10 forms an elongated spine to which 2 to 4 L12 dimers bind in a sequential fashion. Binds GTP-bound translation factors.

In terms of biological role, forms part of the ribosomal stalk which helps the ribosome interact with GTP-bound translation factors. Is thus essential for accurate translation. The polypeptide is Large ribosomal subunit protein bL12 (Bradyrhizobium sp. (strain ORS 278)).